Consider the following 646-residue polypeptide: Secretogranin-1 (646 aa).

The first 20 residues, 1-20 (MQPAALLGLLGATVVAAVSS), serve as a signal peptide directing secretion. C36 and C57 are disulfide-bonded. The span at 67–90 (ELKNEEKSENENTRFEVRLLRDPA) shows a compositional bias: basic and acidic residues. A disordered region spans residues 67 to 483 (ELKNEEKSEN…GKQYAPHHIT (417 aa)). At S74 the chain carries Phosphoserine. T79 and T92 each carry phosphothreonine. 4 positions are modified to phosphoserine: S93, S99, S100, and S104. S93 carries O-linked (Xyl...) (chondroitin sulfate) serine glycosylation. T113 is a glycosylation site (O-linked (GalNAc...) threonine). 2 stretches are compositionally biased toward basic and acidic residues: residues 119–128 (SGGHSRERAG) and 137–173 (KEAKTRYSKSEGQNREEEMVKYQKRERGEVGSEERLS). Residues S123, S146, and S168 each carry the phosphoserine modification. A compositionally biased stretch (polar residues) spans 182–191 (AFLNQRNQTP). O-linked (GalNAc...) threonine glycosylation occurs at T190. S205 is modified (phosphoserine). The segment covering 208 to 228 (GLEKSHSRERSSQESGEETKS) has biased composition (basic and acidic residues). An O-linked (Xyl...) (chondroitin sulfate) serine glycan is attached at S222. Residues 260–270 (RHSRPRHHHGR) are compositionally biased toward basic residues. Phosphoserine occurs at positions 276, 277, and 295. Y315 is subject to Sulfotyrosine. A compositionally biased stretch (basic and acidic residues) spans 340-361 (GRGEHQALRRPSEESLEQENKR). Residues S351 and S354 each carry the phosphoserine modification. Y374 carries the post-translational modification Phosphotyrosine. A phosphoserine mark is found at S375 and S378. The span at 406–425 (TDEKRFLGETHHRVQESQRD) shows a compositional bias: basic and acidic residues. The residue at position 441 (Y441) is a Sulfotyrosine. Composition is skewed to basic and acidic residues over residues 442 to 451 (GEEKGEEAAR) and 459 to 472 (DPRDADENREEARL). Q476 carries the pyrrolidone carboxylic acid; in secretogranin-1(476-566) modification. 3 positions are modified to phosphoserine: S502, S503, and S514. Y535 carries the sulfotyrosine modification. The residue at position 567 (Q567) is a Pyrrolidone carboxylic acid; in peptide BAM-1745. S584 carries the phosphoserine modification. The tract at residues 588 to 620 (PDFYDSEEQMSPQHTAENEEEKAGQGVLTEEEE) is disordered. Y591 carries the post-translational modification Sulfotyrosine. Residues S593 and S598 each carry the phosphoserine modification. Q634 carries the post-translational modification Pyrrolidone carboxylic acid; in Secretolytin; partial.

Belongs to the chromogranin/secretogranin protein family. As to quaternary structure, interacts with ITPR1 in the secretory granules. O-glycosylated by the trisaccharide, GalNAc-Gal-NeuAc, on 2 sites in the N-terminal. May be glycated. Post-translationally, extensively phosphorylated. In terms of processing, differentially processed on numerous sites throughout the sequence depending on tissue type.

Its subcellular location is the cytoplasmic vesicle. It localises to the secretory vesicle membrane. The protein localises to the secreted. Secretogranin-1 is a neuroendocrine secretory granule protein, which may be the precursor for other biologically active peptides. The 16 pairs of basic AA distributed throughout its sequence may be used as proteolytic cleavage sites. Functionally, secretolytin has antibacterial activity. This chain is Secretogranin-1 (CHGB), found in Bos taurus (Bovine).